The following is a 417-amino-acid chain: Serine hydroxymethyltransferase (417 aa).

Residues leucine 121 and 125–127 (GHL) each bind (6S)-5,6,7,8-tetrahydrofolate. An N6-(pyridoxal phosphate)lysine modification is found at lysine 229. 355–357 (SPF) serves as a coordination point for (6S)-5,6,7,8-tetrahydrofolate.

This sequence belongs to the SHMT family. In terms of assembly, homodimer. It depends on pyridoxal 5'-phosphate as a cofactor.

Its subcellular location is the cytoplasm. The enzyme catalyses (6R)-5,10-methylene-5,6,7,8-tetrahydrofolate + glycine + H2O = (6S)-5,6,7,8-tetrahydrofolate + L-serine. It participates in one-carbon metabolism; tetrahydrofolate interconversion. It functions in the pathway amino-acid biosynthesis; glycine biosynthesis; glycine from L-serine: step 1/1. Functionally, catalyzes the reversible interconversion of serine and glycine with tetrahydrofolate (THF) serving as the one-carbon carrier. This reaction serves as the major source of one-carbon groups required for the biosynthesis of purines, thymidylate, methionine, and other important biomolecules. Also exhibits THF-independent aldolase activity toward beta-hydroxyamino acids, producing glycine and aldehydes, via a retro-aldol mechanism. This is Serine hydroxymethyltransferase from Shewanella baltica (strain OS223).